We begin with the raw amino-acid sequence, 232 residues long: Ubiquinone biosynthesis O-methyltransferase (232 aa).

S-adenosyl-L-methionine-binding residues include Arg36, Gly55, Asp76, and Leu120.

The protein belongs to the methyltransferase superfamily. UbiG/COQ3 family.

The enzyme catalyses a 3-demethylubiquinol + S-adenosyl-L-methionine = a ubiquinol + S-adenosyl-L-homocysteine + H(+). It carries out the reaction a 3-(all-trans-polyprenyl)benzene-1,2-diol + S-adenosyl-L-methionine = a 2-methoxy-6-(all-trans-polyprenyl)phenol + S-adenosyl-L-homocysteine + H(+). Its pathway is cofactor biosynthesis; ubiquinone biosynthesis. In terms of biological role, O-methyltransferase that catalyzes the 2 O-methylation steps in the ubiquinone biosynthetic pathway. The sequence is that of Ubiquinone biosynthesis O-methyltransferase from Pseudomonas putida (strain W619).